Reading from the N-terminus, the 161-residue chain is Nucleotide-binding protein GM21_0633 (161 aa).

It belongs to the YajQ family.

Functionally, nucleotide-binding protein. This is Nucleotide-binding protein GM21_0633 from Geobacter sp. (strain M21).